Here is a 271-residue protein sequence, read N- to C-terminus: Acetyl-coenzyme A carboxylase carboxyl transferase subunit alpha (271 aa).

One can recognise a CoA carboxyltransferase C-terminal domain in the interval methionine 1 to glutamate 247.

The protein belongs to the AccA family. As to quaternary structure, acetyl-CoA carboxylase is a heterohexamer composed of biotin carboxyl carrier protein (AccB), biotin carboxylase (AccC) and two subunits each of ACCase subunit alpha (AccA) and ACCase subunit beta (AccD).

It localises to the cytoplasm. It catalyses the reaction N(6)-carboxybiotinyl-L-lysyl-[protein] + acetyl-CoA = N(6)-biotinyl-L-lysyl-[protein] + malonyl-CoA. It functions in the pathway lipid metabolism; malonyl-CoA biosynthesis; malonyl-CoA from acetyl-CoA: step 1/1. Functionally, component of the acetyl coenzyme A carboxylase (ACC) complex. First, biotin carboxylase catalyzes the carboxylation of biotin on its carrier protein (BCCP) and then the CO(2) group is transferred by the carboxyltransferase to acetyl-CoA to form malonyl-CoA. This chain is Acetyl-coenzyme A carboxylase carboxyl transferase subunit alpha, found in Clostridium perfringens (strain SM101 / Type A).